The chain runs to 129 residues: Glycine cleavage system H protein (129 aa).

One can recognise a Lipoyl-binding domain in the interval 24 to 106; the sequence is IAVIGISAYA…YEQGWLLKVQ (83 aa). Lysine 65 is modified (N6-lipoyllysine).

It belongs to the GcvH family. In terms of assembly, the glycine cleavage system is composed of four proteins: P, T, L and H. The cofactor is (R)-lipoate.

In terms of biological role, the glycine cleavage system catalyzes the degradation of glycine. The H protein shuttles the methylamine group of glycine from the P protein to the T protein. This Synechococcus elongatus (strain ATCC 33912 / PCC 7942 / FACHB-805) (Anacystis nidulans R2) protein is Glycine cleavage system H protein.